Reading from the N-terminus, the 204-residue chain is Large ribosomal subunit protein uL4 (204 aa).

Residues 42–55 (GSRQGSKAQKNRSA) are compositionally biased toward polar residues. The disordered stretch occupies residues 42–85 (GSRQGSKAQKNRSAVSGGGKRPWAQKGTGRARAGTTRGPIWRSG). Positions 68–79 (GTGRARAGTTRG) are enriched in low complexity.

It belongs to the universal ribosomal protein uL4 family. In terms of assembly, part of the 50S ribosomal subunit.

One of the primary rRNA binding proteins, this protein initially binds near the 5'-end of the 23S rRNA. It is important during the early stages of 50S assembly. It makes multiple contacts with different domains of the 23S rRNA in the assembled 50S subunit and ribosome. In terms of biological role, forms part of the polypeptide exit tunnel. This chain is Large ribosomal subunit protein uL4, found in Vesicomyosocius okutanii subsp. Calyptogena okutanii (strain HA).